Here is a 141-residue protein sequence, read N- to C-terminus: Hemoglobin subunit alpha (141 aa).

The 141-residue stretch at 1 to 141 (VLSSADKNNV…VSTVLTSKYR (141 aa)) folds into the Globin domain. Position 3 is a phosphoserine (Ser-3). N6-succinyllysine is present on residues Lys-7 and Lys-11. The residue at position 16 (Lys-16) is an N6-acetyllysine; alternate. Lys-16 carries the post-translational modification N6-succinyllysine; alternate. Tyr-24 carries the post-translational modification Phosphotyrosine. Ser-35 is subject to Phosphoserine. Lys-40 carries the post-translational modification N6-succinyllysine. The residue at position 49 (Ser-49) is a Phosphoserine. His-58 is an O2 binding site. Heme b is bound at residue His-87. Ser-102 carries the post-translational modification Phosphoserine. Thr-108 bears the Phosphothreonine mark. Ser-124 carries the phosphoserine modification. Residues Thr-134 and Thr-137 each carry the phosphothreonine modification. At Ser-138 the chain carries Phosphoserine.

Belongs to the globin family. In terms of assembly, heterotetramer of two alpha chains and two beta chains. In terms of tissue distribution, red blood cells.

Involved in oxygen transport from the lung to the various peripheral tissues. Its function is as follows. Hemopressin acts as an antagonist peptide of the cannabinoid receptor CNR1. Hemopressin-binding efficiently blocks cannabinoid receptor CNR1 and subsequent signaling. In Panthera tigris sumatrae (Sumatran tiger), this protein is Hemoglobin subunit alpha (HBA).